Here is a 158-residue protein sequence, read N- to C-terminus: NAD(P)H-quinone oxidoreductase subunit J, chloroplastic (158 aa).

The protein belongs to the complex I 30 kDa subunit family. NDH is composed of at least 16 different subunits, 5 of which are encoded in the nucleus.

It is found in the plastid. Its subcellular location is the chloroplast thylakoid membrane. The catalysed reaction is a plastoquinone + NADH + (n+1) H(+)(in) = a plastoquinol + NAD(+) + n H(+)(out). The enzyme catalyses a plastoquinone + NADPH + (n+1) H(+)(in) = a plastoquinol + NADP(+) + n H(+)(out). In terms of biological role, NDH shuttles electrons from NAD(P)H:plastoquinone, via FMN and iron-sulfur (Fe-S) centers, to quinones in the photosynthetic chain and possibly in a chloroplast respiratory chain. The immediate electron acceptor for the enzyme in this species is believed to be plastoquinone. Couples the redox reaction to proton translocation, and thus conserves the redox energy in a proton gradient. The chain is NAD(P)H-quinone oxidoreductase subunit J, chloroplastic from Aethionema grandiflorum (Persian stone-cress).